We begin with the raw amino-acid sequence, 931 residues long: G patch domain-containing protein 1 (931 aa).

The span at 1 to 12 shows a compositional bias: acidic residues; the sequence is MAALDSDSDEDL. Disordered regions lie at residues 1-41, 72-92, and 169-213; these read MAAL…TVRD, TPSS…LGPE, and QGIG…YLPE. An N-acetylalanine modification is found at Ala-2. Phosphoserine is present on residues Ser-6 and Ser-8. Residues 72–81 show a composition bias toward polar residues; it reads TPSSFVSSRQ. The 47-residue stretch at 152-198 folds into the G-patch domain; the sequence is KLSVGFELLRKMGWKEGQGIGPRVKRRPRRQKPDPGVKIYGCALPPG. Positions 202-211 are enriched in acidic residues; it reads GSEDEDDDYL. Lys-313 is covalently cross-linked (Glycyl lysine isopeptide (Lys-Gly) (interchain with G-Cter in SUMO2)). A phosphoserine mark is found at Ser-358 and Ser-479. Disordered stretches follow at residues 567–594 and 659–931; these read SRFT…VSDK and SPVT…LRRQ. The span at 582–593 shows a compositional bias: basic and acidic residues; the sequence is EVPRDQENDVSD. A compositionally biased stretch (polar residues) spans 659 to 668; the sequence is SPVTQASSEK. Residues 669-695 show a composition bias toward basic and acidic residues; the sequence is VAQHRASDKSRKPSRWDTSKEEKKEDS. Ser-715 is modified (phosphoserine). The segment covering 769–780 has biased composition (acidic residues); sequence SEDEQGDSEDDQ. The segment covering 781–792 has biased composition (basic and acidic residues); sequence EGTREADFKSSQ. Positions 852–888 are enriched in basic residues; sequence EKHKKNKEKHKTKKEHRRKKEKKKKHRKHKHKGKQKN. Positions 896–905 are enriched in low complexity; sequence SSESTDSSDS. The segment covering 922–931 has biased composition (basic residues); that stretch reads RLKRLPLRRQ.

The protein belongs to the GPATCH1 family.

This is G patch domain-containing protein 1 (GPATCH1) from Bos taurus (Bovine).